The primary structure comprises 873 residues: MQDKYTPAAVEATAQQHWESTQAFKVAEDAGKPKYYCLSMFPYPSGKLHMGHVRNYTIGDVLARYHRMRGFNVLQPMGWDAFGMPAENAAIQNNVPPAKWTYANIDYMKTQLKRLGFALDWSRELATCKPDYYRWEQWLFTRLYQKGLIYKKLGTVNWDPVDETVLANEQVIDGRGWRSGALIEKREIPMYYMKITAYADELLEALDTLTGWPEQVKLMQKNWIGRSEGVEVHFPYEVSTIGASGVLKVFTTRADTLMGATYVAVAAEHPLALQAAVNDPELAAFIEECRHGGVAEADLATMEKKGMPTGLRVVHPLTGEHLPVWIANYVLMGYGEGAVMAVPAHDERDFAFATKYRLPIRMVVRSTRDAYTDTVAPWQDAYAEQGRLVNSGKYDGLHFHDAIEAIAAELTAKGLGAKRTQYRLRDWGISRQRYWGCPIPMIHCADCGDVPVPDEQLPVVLPEDVAVTGRGSPLAKMPRFYECDCPKCGKPAKRETDTMDTFVESSWYFLRYASADNGQAMVDERVNYWAPVDQYIGGIEHAILHLLYSRFFTRAMRDEGLVNVSEPFTNLLTQGMVVAETYYRDADGGKKQWINPADVEVERDEKGRIVAAKLTADGAPVVIGGIEKMAKSKNNGVDPQALVDQYGADTARLFIIFAAPPDQQLEWSDSGVEGAYRFLRRVWSFGHAFVSEFRPQLPADRQLDAVQLPEALAAVRREIHVCLRQANYDFGKHQFNTVVSAAMKILNALEKAPRDVAAAHAQVAEEGLDILLRLLAPITPHVAHALWQDCGFTGDVLHASWPEPSEDALRQDEIDLVLQVNGKLRGSLRVAAGASNSAIEALALGSETAQKFMEGKPPRKVVVVPGRLVNIVV.

Positions 42 to 52 (PYPSGKLHMGH) match the 'HIGH' region motif. Residues 628–632 (KMAKS) carry the 'KMSKS' region motif. Lys631 is a binding site for ATP.

Belongs to the class-I aminoacyl-tRNA synthetase family.

The protein resides in the cytoplasm. It carries out the reaction tRNA(Leu) + L-leucine + ATP = L-leucyl-tRNA(Leu) + AMP + diphosphate. The sequence is that of Leucine--tRNA ligase from Aromatoleum aromaticum (strain DSM 19018 / LMG 30748 / EbN1) (Azoarcus sp. (strain EbN1)).